Here is a 198-residue protein sequence, read N- to C-terminus: Virion infectivity factor (198 aa).

The segment at 76–115 (GERPWHLGHGIGLEWRQGKYSTQIDPETADQLIHTRYFTC) is RNA-binding. Thr-97 carries the phosphothreonine; by host MAP4K1 modification. The short motif at 109–140 (HTRYFTCFAAGAVRQAILGERILTFCHFQSGH) is the HCCH motif element. Phosphothreonine; by host is present on Thr-145. Residues 145–154 (TLQFLAFRKV) carry the BC-box-like motif motif. Positions 152 to 170 (RKVVESQDKQPKGPRRPLP) are multimerization. The tract at residues 159–198 (DKQPKGPRRPLPSVTKLTEDRWNKHRTTTGRRENHTLSGC) is disordered. The residue at position 171 (Ser-171) is a Phosphoserine; by host MAP4K1. The membrane association stretch occupies residues 177–178 (ED). A compositionally biased stretch (basic and acidic residues) spans 188 to 198 (GRRENHTLSGC).

Belongs to the primate lentivirus group Vif protein family. In terms of assembly, homomultimer; in vitro and presumably in vivo. Interacts with viral Pr55Gag precursor, host APOBEC3G, UBCE7IP1 isoform 3/ZIN, ABCE1 and possibly with SAT. Forms an E3 ligase complex by interacting with host CUL5 and elongin BC complex (ELOB and ELOC). In terms of processing, highly phosphorylated on serine and threonine residues. Thr-97 and Ser-171 are phosphorylated by the mitogen activated kinase MAP4K1. Post-translationally, polyubiquitinated and degraded by the proteasome in the presence of APOBEC3G.

It is found in the host cytoplasm. It localises to the host cell membrane. The protein localises to the virion. Its function is as follows. Counteracts the innate antiviral activity of APOBEC3G. Forms a complex with host APOBEC3G thus preventing the entry of this lethally hypermutating enzyme into progeny virions. Functions as an adapter molecule, recruiting APOBEC3G to the ubiquitin-proteasome machinery. Targets APOBEC3G for degradation through the assembly with elongin BC complex, CUL5 and RBX1. Binds viral RNA and affects the stability of viral nucleoprotein core. May play a role in viral morphology. Interacts with host ABCE1, which seems to be involved in lentiviruses capsid formation and displays RNase L inhibitor activity. This interaction may play a role in protecting viral RNA from damage during viral assembly. May interact with host SAT, which is a regulator of polyamine cell level. This interaction may be relevant since polyamines affect viral RNA properties. This Pan troglodytes (Chimpanzee) protein is Virion infectivity factor.